The following is a 462-amino-acid chain: L-seryl-tRNA(Sec) selenium transferase (462 aa).

K293 is modified (N6-(pyridoxal phosphate)lysine).

The protein belongs to the SelA family. The cofactor is pyridoxal 5'-phosphate.

The protein localises to the cytoplasm. It carries out the reaction L-seryl-tRNA(Sec) + selenophosphate + H(+) = L-selenocysteinyl-tRNA(Sec) + phosphate. The protein operates within aminoacyl-tRNA biosynthesis; selenocysteinyl-tRNA(Sec) biosynthesis; selenocysteinyl-tRNA(Sec) from L-seryl-tRNA(Sec) (bacterial route): step 1/1. Its function is as follows. Converts seryl-tRNA(Sec) to selenocysteinyl-tRNA(Sec) required for selenoprotein biosynthesis. The sequence is that of L-seryl-tRNA(Sec) selenium transferase from Clostridium botulinum (strain ATCC 19397 / Type A).